The primary structure comprises 265 residues: Undecaprenyl-diphosphatase (265 aa).

Helical transmembrane passes span 38-58 (SDMFNIVIQAGAILAVTIIYW), 80-100 (LIVAFLITAILGLVVKKLGFE), 107-127 (PIAWALIIGGIWMIFAEWAAA), 135-155 (ITWLVAILVGIAQIVAGVFPG), 178-198 (TEFAFLVGIPTMYAASAYELL), 216-236 (IAFVVSTVVAFIAVKWLLAYI), and 244-264 (FAIYRIILGVLLLGMAATGLI).

The protein belongs to the UppP family.

The protein resides in the cell inner membrane. The enzyme catalyses di-trans,octa-cis-undecaprenyl diphosphate + H2O = di-trans,octa-cis-undecaprenyl phosphate + phosphate + H(+). Catalyzes the dephosphorylation of undecaprenyl diphosphate (UPP). Confers resistance to bacitracin. The chain is Undecaprenyl-diphosphatase from Rhizobium johnstonii (strain DSM 114642 / LMG 32736 / 3841) (Rhizobium leguminosarum bv. viciae).